The primary structure comprises 684 residues: Histamine oxidase (684 aa).

316–327 (YFDSGEYLVGRD) serves as a coordination point for substrate. Asp318 acts as the Proton acceptor in catalysis. Cys337 and Cys363 are oxidised to a cystine. A substrate-binding site is contributed by 399–404 (VGNYDY). Catalysis depends on Tyr402, which acts as the Schiff-base intermediate with substrate; via topaquinone. The residue at position 402 (Tyr402) is a 2',4',5'-topaquinone. 2 residues coordinate Cu cation: His451 and His453. Residues Asp460, Glu500, Tyr590, and Asp601 each coordinate Ca(2+). Asp460 is a binding site for Mn(2+). Position 601 (Asp601) interacts with Mn(2+). His612 contributes to the Cu cation binding site. The tract at residues 647 to 684 (SSAAGHCGTGSEREHAAPGGTAVGHSGPDTGGQGHCGH) is disordered. Residues 675–684 (DTGGQGHCGH) show a composition bias toward gly residues.

The protein belongs to the copper/topaquinone oxidase family. Homodimer. Cu cation is required as a cofactor. It depends on Zn(2+) as a cofactor. The cofactor is Ca(2+). L-topaquinone serves as cofactor. Requires Mn(2+) as cofactor. In terms of processing, topaquinone (TPQ) is generated by copper-dependent autoxidation of a specific tyrosyl residue.

The protein resides in the cytoplasm. The enzyme catalyses a primary methyl amine + O2 + H2O = an aldehyde + H2O2 + NH4(+). The catalysed reaction is histamine + O2 + H2O = imidazole-4-acetaldehyde + H2O2 + NH4(+). Oxidizes histamine. Other amines including phenethylamine, tyramine, tryptamine, putrescine, and benzylamine also serve as substrate. The polypeptide is Histamine oxidase (Arthrobacter globiformis).